Consider the following 499-residue polypeptide: Circadian clock oscillator protein KaiC (499 aa).

KaiC domains lie at 1 to 243 and 257 to 499; these read MQSS…VSVF and VRIS…DERA. Positions 45, 46, 47, 48, 49, 85, 220, 221, 222, 224, 226, 286, 287, 288, 289, 290, 291, and 292 each coordinate ATP. Residue Thr49 participates in Mg(2+) binding. Thr291 contacts Mg(2+). Glu314 lines the Mg(2+) pocket. Residue Trp327 coordinates ATP. At Ser427 the chain carries Phosphoserine; by autocatalysis. Thr428 carries the post-translational modification Phosphothreonine; by autocatalysis. ATP-binding residues include Arg447, Lys453, Met454, Arg455, Ser457, His459, and Lys461.

The protein belongs to the KaiC family. Homohexamer; hexamerization is dependent on ATP-binding. Component of the KaiBC complex. KaiC interacts with SasA, activating its autokinase function and leading to RpaA activation. The cofactor is Mg(2+). In terms of processing, phosphorylated on serine and threonine residues by autocatalysis. Has a 4 step phosphorylation cycle; the autokinase acts first on Thr-428, then Ser-427. When Ser-427 is modified KaiC switches to an autophosphatase mode, acting first on phospho-Thr-428 then phospho-Ser-427.

It carries out the reaction L-seryl-[protein] + ATP = O-phospho-L-seryl-[protein] + ADP + H(+). The catalysed reaction is L-threonyl-[protein] + ATP = O-phospho-L-threonyl-[protein] + ADP + H(+). It catalyses the reaction ATP + H2O = ADP + phosphate + H(+). Central component of the KaiBC oscillator complex, which constitutes the main circadian regulator in cyanobacteria. Its composition changes during the circadian cycle to control KaiC phosphorylation. Autophosphorylates and has a weak ATPase activity; ATPase activity defines the circadian period. In Prochlorococcus marinus (strain MIT 9313), this protein is Circadian clock oscillator protein KaiC.